Reading from the N-terminus, the 519-residue chain is MEWKLERTAPRRVRTEEEMLWESIMRVLSKDLKQKRSQDSANVLDSVNATYSDFKSNFAKRLSAEVPVASSPITTRWQQSQTRALSSDSFGEEQSTTYLPEASGSVLKTPPEKETLTLGSRKEQLKTPSKGISETSNSALHFCKAPHAMDRDWKESVASKGQKCLKQLFVTQNVVQQANGKMQLCEQSECVWKGCKDGVRDESFHLKSSGDINDSILQPEVKIHITGLRNDYYLNILDWSFQNLVAIALGSAVYIWNGENHNGIENIDLSLTCNYISSVSWIKEGTCLAVGTSEGEVQLWDVVTKKRLRNMLGHLSVVGALSWNHFILSSGSRLGRVYHHDVRVAQHHVGTLRHKQAVCALKWSPDGRLLSSGCSDGLLTIWPHDPGASAQGQPLKVITQSTAVKAMDWCPWQSGVLAIGGGMKDGRLHILDINAGKSIQTPSTNSQICSLIWLPKTKEIATGQGTPKNDVTVWTCPTVSRSGGFFGHRGRVLHLSLSPDQTRVFSAAADGTASVWNCY.

The segment covering 79–98 has biased composition (polar residues); that stretch reads QSQTRALSSDSFGEEQSTTY. The segment at 79 to 133 is disordered; that stretch reads QSQTRALSSDSFGEEQSTTYLPEASGSVLKTPPEKETLTLGSRKEQLKTPSKGIS. The segment covering 110-125 has biased composition (basic and acidic residues); the sequence is PPEKETLTLGSRKEQL. WD repeat units follow at residues 229 to 266, 271 to 310, 311 to 341, 353 to 392, 399 to 441, 443 to 484, and 487 to 519; these read RNDY…GIEN, LTCN…RLRN, MLGH…YHHD, RHKQ…SAQG, TQST…SIQT, STNS…RSGG, and GHRG…WNCY.

The protein belongs to the WD repeat CDC20/Fizzy family. In terms of tissue distribution, expressed in multiciliated cells (MCCs).

Its subcellular location is the cytoplasm. In terms of biological role, protein regulator of centriole-deuterosome disengagement and subsequently participates in the ciliogenesis in multiciliated cells (MCCs). The sequence is that of Cell division cycle protein 20 homolog B from Homo sapiens (Human).